We begin with the raw amino-acid sequence, 156 residues long: Nucleosome assembly protein 1-like 5 (156 aa).

The segment covering 1 to 16 (MADPEKQGPAESRAED) has biased composition (basic and acidic residues). The tract at residues 1 to 58 (MADPEKQGPAESRAEDEVMEGAQGGEDAATGDSAAAPAAEEPQAPAENAPKPKKDFME) is disordered. Residues 34–49 (AAAPAAEEPQAPAENA) are compositionally biased toward low complexity. Residues 68 to 94 (VLALKKLQKRCDKIEAKFDKEFQALEK) are a coiled coil. Positions 120-156 (TLEGEDDEDDEEEDDEEEEEEEEAAAGATGGPNFAKK) are disordered. A compositionally biased stretch (acidic residues) spans 122 to 143 (EGEDDEDDEEEDDEEEEEEEEA).

It belongs to the nucleosome assembly protein (NAP) family.

The protein localises to the nucleus. The polypeptide is Nucleosome assembly protein 1-like 5 (Nap1l5) (Mus musculus (Mouse)).